The sequence spans 514 residues: ATP synthase subunit alpha (514 aa).

170–177 (GDRQIGKT) provides a ligand contact to ATP.

Belongs to the ATPase alpha/beta chains family. F-type ATPases have 2 components, CF(1) - the catalytic core - and CF(0) - the membrane proton channel. CF(1) has five subunits: alpha(3), beta(3), gamma(1), delta(1), epsilon(1). CF(0) has three main subunits: a(1), b(2) and c(9-12). The alpha and beta chains form an alternating ring which encloses part of the gamma chain. CF(1) is attached to CF(0) by a central stalk formed by the gamma and epsilon chains, while a peripheral stalk is formed by the delta and b chains.

It localises to the cell inner membrane. The catalysed reaction is ATP + H2O + 4 H(+)(in) = ADP + phosphate + 5 H(+)(out). Functionally, produces ATP from ADP in the presence of a proton gradient across the membrane. The alpha chain is a regulatory subunit. The protein is ATP synthase subunit alpha of Pseudomonas savastanoi pv. phaseolicola (strain 1448A / Race 6) (Pseudomonas syringae pv. phaseolicola (strain 1448A / Race 6)).